Reading from the N-terminus, the 249-residue chain is 5'-nucleotidase SurE (249 aa).

A divalent metal cation is bound by residues Asp-8, Asp-9, Ser-39, and Asn-91.

The protein belongs to the SurE nucleotidase family. A divalent metal cation serves as cofactor.

Its subcellular location is the cytoplasm. The catalysed reaction is a ribonucleoside 5'-phosphate + H2O = a ribonucleoside + phosphate. Functionally, nucleotidase that shows phosphatase activity on nucleoside 5'-monophosphates. This chain is 5'-nucleotidase SurE, found in Pseudomonas putida (strain ATCC 700007 / DSM 6899 / JCM 31910 / BCRC 17059 / LMG 24140 / F1).